The primary structure comprises 138 residues: Small ribosomal subunit protein uS12 (138 aa).

Residues 33–55 (KEHTNVSSPQKRGVCTRVGTMTP) are disordered. Asp102 carries the post-translational modification 3-methylthioaspartic acid.

It belongs to the universal ribosomal protein uS12 family. Part of the 30S ribosomal subunit. Contacts proteins S8 and S17. May interact with IF1 in the 30S initiation complex.

With S4 and S5 plays an important role in translational accuracy. Functionally, interacts with and stabilizes bases of the 16S rRNA that are involved in tRNA selection in the A site and with the mRNA backbone. Located at the interface of the 30S and 50S subunits, it traverses the body of the 30S subunit contacting proteins on the other side and probably holding the rRNA structure together. The combined cluster of proteins S8, S12 and S17 appears to hold together the shoulder and platform of the 30S subunit. The chain is Small ribosomal subunit protein uS12 from Bacillus licheniformis (strain ATCC 14580 / DSM 13 / JCM 2505 / CCUG 7422 / NBRC 12200 / NCIMB 9375 / NCTC 10341 / NRRL NRS-1264 / Gibson 46).